Here is a 422-residue protein sequence, read N- to C-terminus: GPI mannosyltransferase 1 (422 aa).

8 helical membrane-spanning segments follow: residues 10–30 (TTPL…YGIY), 82–102 (FPAF…WLIL), 162–182 (IILG…PAIV), 216–236 (LKFG…MFAI), 282–302 (IESF…PLAL), 327–347 (SQYF…SSFL), 352–372 (LGIF…QQGY), and 385–405 (GLWL…GVII).

This sequence belongs to the PIGM family.

It is found in the endoplasmic reticulum membrane. It participates in glycolipid biosynthesis; glycosylphosphatidylinositol-anchor biosynthesis. Mannosyltransferase involved in glycosylphosphatidylinositol-anchor biosynthesis. Transfers the first alpha-1,4-mannose to GlcN-acyl-PI during GPI precursor assembly. Required for cell wall integrity. The chain is GPI mannosyltransferase 1 (GPI14) from Gibberella zeae (strain ATCC MYA-4620 / CBS 123657 / FGSC 9075 / NRRL 31084 / PH-1) (Wheat head blight fungus).